We begin with the raw amino-acid sequence, 441 residues long: Homoserine dehydrogenase (441 aa).

NADP(+) contacts are provided by Asn-17 and Val-18. NAD(+) contacts are provided by Val-18, Val-37, and Gly-47. Val-18 contacts NADPH. Positions 49, 50, and 107 each coordinate NADP(+). Residue Arg-49 participates in NADPH binding. An NADPH-binding site is contributed by Lys-107. Na(+) is bound by residues Glu-131, Val-134, Gly-136, and Ile-138. Residues Gly-189 and Glu-192 each contribute to the NADP(+) site. Residues Glu-192 and Asp-203 each contribute to the L-homoserine site. Residue Lys-207 is the Proton donor of the active site. Gly-309 is a binding site for NADP(+). NAD(+) is bound at residue Gly-309. Residue Gly-309 coordinates NADPH. The region spanning 356–435 (YVSMNVADKP…VVQGVSSVIR (80 aa)) is the ACT domain.

This sequence belongs to the homoserine dehydrogenase family. A metal cation is required as a cofactor.

The enzyme catalyses L-homoserine + NADP(+) = L-aspartate 4-semialdehyde + NADPH + H(+). It carries out the reaction L-homoserine + NAD(+) = L-aspartate 4-semialdehyde + NADH + H(+). It functions in the pathway amino-acid biosynthesis; L-methionine biosynthesis via de novo pathway; L-homoserine from L-aspartate: step 3/3. It participates in amino-acid biosynthesis; L-threonine biosynthesis; L-threonine from L-aspartate: step 3/5. In terms of biological role, catalyzes the conversion of L-aspartate-beta-semialdehyde (L-Asa) to L-homoserine (L-Hse), the third step in the biosynthesis of threonine and methionine from aspartate. The chain is Homoserine dehydrogenase (hom) from Mycobacterium tuberculosis (strain CDC 1551 / Oshkosh).